The sequence spans 286 residues: Protein N-terminal amidase (286 aa).

The region spanning M1–K286 is the CN hydrolase domain. E43 acts as the Proton acceptor in catalysis. Residue K121 is the Proton donor of the active site. C155 acts as the Nucleophile in catalysis.

This sequence belongs to the carbon-nitrogen hydrolase superfamily.

The protein localises to the cytoplasm. The protein resides in the nucleus. Deamidates N-terminal Asn and Gln. Component of a targeting complex in the N-end rule pathway. The protein is Protein N-terminal amidase (nta1) of Schizosaccharomyces pombe (strain 972 / ATCC 24843) (Fission yeast).